The chain runs to 754 residues: ToMV susceptible protein tm-1(GCR26) (754 aa).

Residues 1 to 201 (MATAQSNSPR…AGMVIGRLES (201 aa)) are N-terminal inhibitory domain NN. Residues 18-20 (DTK), Thr55, Arg92, and 124-127 (GSGG) contribute to the ATP site. The interval 211-431 (KFTVGVTMFG…VDSFLEMSPK (221 aa)) is N-terminal inhibitory domain NC.

It belongs to the UPF0261 family. Homodimer. As to quaternary structure, (Microbial infection) Binds, via an ATP bridge, to the tobamoviruses avirulent (Avr) replication proteins (large and small subunits, e.g. tobacco mild green mosaic virus (TMGMV) AC P18339 and pepper mild mottle virus (PMMoV) AC P89657) to inhibit their function after the translation of tobamoviruses RNA, but before the viral replication complex formation on the membrane surfaces; this interaction is not possible with resistance-breaking strains replication proteins.

Inhibitor of viral RNA replication which confers resistance to some tobamoviruses including tobacco mild green mosaic virus (TMGMV) and pepper mild mottle virus (PMMoV), but not to tomato mosaic virus (ToMV strains L, ToMV0 and ToMV1-2) and tobacco mosaic virus (TMV). Prevents tobamoviruses RNA replication by affecting the association of tobamoviruses replication proteins (large and small subunits) with host membrane-associated proteins (e.g. TOM1, TOM2A and ARL8), thus inhibiting the replication complex formation on the membranes and avoiding viral negative-strand RNA synthesis. The protein is ToMV susceptible protein tm-1(GCR26) of Solanum lycopersicum (Tomato).